A 434-amino-acid polypeptide reads, in one-letter code: Bcl-2-like protein 13 (434 aa).

The short motif at 14–30 (ETKYVVLSYLGLLSQEK) is the BH4 element. S35 carries the phosphoserine modification. The BH3 signature appears at 97-113 (IEDCLAHLGERVSQDLK). Residues 144-154 (ASGWNKLLVPL) carry the BH1 motif. Residues 190-203 (FIIQQGGWGSVFSL) carry the BH2 motif. The segment at 224-245 (LPSDNSGQVSPPESPTVTTSWQ) is disordered. The segment covering 226-245 (SDNSGQVSPPESPTVTTSWQ) has biased composition (polar residues). The A repeat unit spans residues 243–253 (SWQSESLPVSL). Residues S256, S258, S300, S343, S347, S377, and S387 each carry the phosphoserine modification. One copy of the A; approximate repeat lies at 258 to 268 (SWHTESLPVSL). The interval 282–303 (EVKSLDSSGAGEKSENNSSNSD) is disordered. The tract at residues 363-398 (RPEAVERAEGAAQLSEERAGSRKKSHTGEAAAVRGA) is disordered. The segment covering 365-382 (EAVERAEGAAQLSEERAG) has biased composition (basic and acidic residues). Residues 409–429 (VLLFGGAAAVAILAVAVGVAL) traverse the membrane as a helical segment.

This sequence belongs to the Bcl-2 family. Monomer.

It localises to the mitochondrion membrane. May promote the activation of caspase-3 and apoptosis. This Mus musculus (Mouse) protein is Bcl-2-like protein 13 (Bcl2l13).